We begin with the raw amino-acid sequence, 134 residues long: MSEALKSLNNIRTLRAQGRELPLEILEELLEKLSVVVEERRQEESSKEAELKARLEKIESLRQLMLEDGIDPEELLSSFSAKSGAPKKVREPRPAKYKYTDVNGETKTWTGQGRTPKALAEQLEAGKKLDDFLI.

Residues 23 to 67 adopt a coiled-coil conformation; that stretch reads LEILEELLEKLSVVVEERRQEESSKEAELKARLEKIESLRQLMLE. The interval 77–96 is disordered; it reads SSFSAKSGAPKKVREPRPAK. Residues 112–117 mediate DNA binding; that stretch reads QGRTPK.

The protein belongs to the histone-like protein H-NS family. Homodimer that oligomerizes on DNA into higher-order complexes that form bridges between disparate regions of DNA compacting it. Interacts with Hha, YdgT and StpA.

It localises to the cytoplasm. Its subcellular location is the nucleoid. A DNA-binding protein implicated in transcriptional repression and chromosome organization and compaction. Binds DNA, modifying gene expression, especially non-core genes. Does not regulate the same set of genes as its chromosomal counterpart (tested in S.typhimurium strain SL1344 / SV5015, chromosomal H-NS protein is AC A0A0H3NBY9). Thus it has a not-completely overlapping set of gene targets compared to its chromosomal homolog; many of these target genes are either plasmid-encoded or acquired by horizontally transferred genes (HTG). This protein can function in the absence of H-NS-modulating protein Hha (either chromosomal or plasmid-encoded), although many HTG genes are regulated by an H-NS/Hha complex. Binds nucleation sites in AT-rich DNA and bridges them, forming higher-order nucleoprotein complexes and condensing the chromosome. A subset of genes are repressed by H-NS in association with Hha and/or Cnu (ydgT). The chain is DNA-binding protein H-NS, plasmid (hns) from Salmonella typhi.